The sequence spans 247 residues: 2,3-bisphosphoglycerate-dependent phosphoglycerate mutase (247 aa).

Residues 8-15 (RHGESQWN), 21-22 (TG), Arg-60, 87-90 (ERHY), Lys-98, 114-115 (RR), and 183-184 (GN) each bind substrate. The active-site Tele-phosphohistidine intermediate is His-9. Glu-87 acts as the Proton donor/acceptor in catalysis.

It belongs to the phosphoglycerate mutase family. BPG-dependent PGAM subfamily.

It catalyses the reaction (2R)-2-phosphoglycerate = (2R)-3-phosphoglycerate. Its pathway is carbohydrate degradation; glycolysis; pyruvate from D-glyceraldehyde 3-phosphate: step 3/5. Catalyzes the interconversion of 2-phosphoglycerate and 3-phosphoglycerate. This chain is 2,3-bisphosphoglycerate-dependent phosphoglycerate mutase, found in Prosthecochloris aestuarii (strain DSM 271 / SK 413).